We begin with the raw amino-acid sequence, 142 residues long: Large ribosomal subunit protein uL13 (142 aa).

This sequence belongs to the universal ribosomal protein uL13 family. As to quaternary structure, part of the 50S ribosomal subunit.

Functionally, this protein is one of the early assembly proteins of the 50S ribosomal subunit, although it is not seen to bind rRNA by itself. It is important during the early stages of 50S assembly. In Burkholderia mallei (strain NCTC 10247), this protein is Large ribosomal subunit protein uL13.